We begin with the raw amino-acid sequence, 446 residues long: Glutamine synthetase (446 aa).

Residues 15 to 103 form the GS beta-grasp domain; that stretch reads ENVKFLRLQI…LICDVYYPDG (89 aa). The GS catalytic domain occupies 110-446; that stretch reads PRYVLKRQIE…WELDRYLATY (337 aa). Positions 134 and 136 each coordinate Mg(2+). Residue glutamate 186 coordinates ATP. Mg(2+) contacts are provided by glutamate 191 and glutamate 198. L-glutamate-binding positions include 242 to 243 and glycine 243; that span reads NG. Histidine 247 serves as a coordination point for Mg(2+). An ATP-binding site is contributed by serine 251. Residues arginine 300, glutamate 306, and arginine 318 each coordinate L-glutamate. ATP-binding residues include arginine 318 and arginine 323. Glutamate 335 contacts Mg(2+). Residue arginine 337 coordinates L-glutamate.

Belongs to the glutamine synthetase family. In terms of assembly, interacts with GCBP (TTHA1554). It depends on Mg(2+) as a cofactor.

The protein localises to the cytoplasm. It catalyses the reaction L-glutamate + NH4(+) + ATP = L-glutamine + ADP + phosphate + H(+). Activity increases by approximately two-fold in the presence of GCBP. Functionally, catalyzes the ATP-dependent biosynthesis of glutamine from glutamate and ammonia. The sequence is that of Glutamine synthetase from Thermus thermophilus (strain ATCC 27634 / DSM 579 / HB8).